Here is a 569-residue protein sequence, read N- to C-terminus: Methionine--tRNA ligase (569 aa).

The short motif at 11 to 21 (PYINGVKHLGN) is the 'HIGH' region element. The Zn(2+) site is built by C143, C146, C156, and C159. The short motif at 342 to 346 (KFSTS) is the 'KMSKS' region element. T345 contacts ATP.

The protein belongs to the class-I aminoacyl-tRNA synthetase family. MetG type 1 subfamily. As to quaternary structure, monomer. Zn(2+) serves as cofactor.

Its subcellular location is the cytoplasm. It carries out the reaction tRNA(Met) + L-methionine + ATP = L-methionyl-tRNA(Met) + AMP + diphosphate. Functionally, is required not only for elongation of protein synthesis but also for the initiation of all mRNA translation through initiator tRNA(fMet) aminoacylation. This chain is Methionine--tRNA ligase, found in Caulobacter sp. (strain K31).